We begin with the raw amino-acid sequence, 26 residues long: Coenzyme PQQ synthesis protein A (26 aa).

A cross-link (pyrroloquinoline quinone (Glu-Tyr)) is located at residues 16–20 (EINMY).

Belongs to the PqqA family.

The protein operates within cofactor biosynthesis; pyrroloquinoline quinone biosynthesis. Functionally, required for coenzyme pyrroloquinoline quinone (PQQ) biosynthesis. PQQ is probably formed by cross-linking a specific glutamate to a specific tyrosine residue and excising these residues from the peptide. The sequence is that of Coenzyme PQQ synthesis protein A from Cereibacter sphaeroides (strain ATCC 17029 / ATH 2.4.9) (Rhodobacter sphaeroides).